A 261-amino-acid polypeptide reads, in one-letter code: UPF0246 protein AZOSEA34360 (261 aa).

This sequence belongs to the UPF0246 family.

The polypeptide is UPF0246 protein AZOSEA34360 (Aromatoleum aromaticum (strain DSM 19018 / LMG 30748 / EbN1) (Azoarcus sp. (strain EbN1))).